Reading from the N-terminus, the 510-residue chain is Allene oxide synthase 2, chloroplastic (510 aa).

Residues 1–31 constitute a chloroplast transit peptide; the sequence is MALTLSFSLPLPSLHQKIPSKYSTFRPIIVS. Residues Lys-127, His-158, and Lys-162 each contribute to the heme b site. (13S)-hydroperoxy-(9Z,11E)-octadecadienoate contacts are provided by Asn-315 and Lys-321. Asn-315 is a binding site for (13S)-hydroperoxy-(9Z,11E,15Z)-octadecatrienoate. Heme b-binding residues include Lys-463 and Cys-465.

It belongs to the cytochrome P450 family. Requires heme b as cofactor. In terms of tissue distribution, expressed in flower buds, leaves, roots, stems, petioles and cotyledons. Not detected in ripe fruits. Expressed in sieve elements.

It localises to the plastid. It is found in the chloroplast inner membrane. The enzyme catalyses (13S)-hydroperoxy-(9Z,11E,15Z)-octadecatrienoate = (9Z,13S,15Z)-12,13-epoxyoctadeca-9,11,15-trienoate + H2O. It carries out the reaction (13S)-hydroperoxy-(9Z,11E)-octadecadienoate = (9Z,13S)-12,13-epoxyoctadeca-9,11-dienoate + H2O. Its function is as follows. Cytochrome P450 of the CYP74A subfamily involved in the biosynthesis of jasmonic acid from lipoxygenase-derived hydroperoxides of free fatty acids. Catalyzes the synthesis of unstable allene oxide, which is further converted spontaneously by hydrolysis or cyclization. Metabolizes 13- but not 9-hydroperoxides of linoleic and linolenic acids. Can use 15S-hydroperoxy-11(Z),13(E),17(Z)-eicosatrienoic acid (15-HPET) and 13S-hydroperoxy-9(Z),11(E),15(Z)-octadecatrienoic acid (13-HPOT) as substrates, but only 50% activity with 13S-hydroperoxy-9(Z),11(E)-octadecadienoic acid (13-HPOD). In Solanum lycopersicum (Tomato), this protein is Allene oxide synthase 2, chloroplastic.